Consider the following 192-residue polypeptide: Orotate phosphoribosyltransferase 2 (192 aa).

5-phospho-alpha-D-ribose 1-diphosphate is bound at residue 116 to 124; sequence EDIVTTGLS. The orotate site is built by Thr120 and Arg148.

It belongs to the purine/pyrimidine phosphoribosyltransferase family. PyrE subfamily. In terms of assembly, homodimer. Mg(2+) is required as a cofactor.

The catalysed reaction is orotidine 5'-phosphate + diphosphate = orotate + 5-phospho-alpha-D-ribose 1-diphosphate. Its pathway is pyrimidine metabolism; UMP biosynthesis via de novo pathway; UMP from orotate: step 1/2. In terms of biological role, catalyzes the transfer of a ribosyl phosphate group from 5-phosphoribose 1-diphosphate to orotate, leading to the formation of orotidine monophosphate (OMP). This is Orotate phosphoribosyltransferase 2 from Mesorhizobium japonicum (strain LMG 29417 / CECT 9101 / MAFF 303099) (Mesorhizobium loti (strain MAFF 303099)).